A 56-amino-acid chain; its full sequence is Small ribosomal subunit protein uS14 (56 aa).

At serine 9 the chain carries Phosphoserine. Residue arginine 12 is modified to Omega-N-methylarginine. Zn(2+) is bound by residues cysteine 21, cysteine 24, cysteine 39, and cysteine 42. At lysine 48 the chain carries N6-acetyllysine.

This sequence belongs to the universal ribosomal protein uS14 family. As to quaternary structure, component of the 40S small ribosomal subunit. Zn(2+) serves as cofactor.

The protein localises to the cytoplasm. It localises to the cytosol. The protein resides in the rough endoplasmic reticulum. Component of the small ribosomal subunit. The ribosome is a large ribonucleoprotein complex responsible for the synthesis of proteins in the cell. The polypeptide is Small ribosomal subunit protein uS14 (RPS29) (Sus scrofa (Pig)).